A 161-amino-acid chain; its full sequence is N5-carboxyaminoimidazole ribonucleotide mutase (161 aa).

Substrate contacts are provided by Ser-9, Asp-12, and Arg-39.

It belongs to the AIR carboxylase family. Class I subfamily.

It catalyses the reaction 5-carboxyamino-1-(5-phospho-D-ribosyl)imidazole + H(+) = 5-amino-1-(5-phospho-D-ribosyl)imidazole-4-carboxylate. It participates in purine metabolism; IMP biosynthesis via de novo pathway; 5-amino-1-(5-phospho-D-ribosyl)imidazole-4-carboxylate from 5-amino-1-(5-phospho-D-ribosyl)imidazole (N5-CAIR route): step 2/2. In terms of biological role, catalyzes the conversion of N5-carboxyaminoimidazole ribonucleotide (N5-CAIR) to 4-carboxy-5-aminoimidazole ribonucleotide (CAIR). This is N5-carboxyaminoimidazole ribonucleotide mutase from Vibrio vulnificus (strain CMCP6).